The sequence spans 350 residues: Opsin, longwave 563 nm (350 aa).

Topologically, residues 1–45 are extracellular; sequence HRLAGRHPQDNYEDSTQSSIFTYTNSNSTRGPFEGPNYHIAPRWV. Residue Asn27 is glycosylated (N-linked (GlcNAc...) asparagine). The helical transmembrane segment at 46–70 threads the bilayer; it reads YHLTSVWMLFVVVASVFTNGLVLAA. Residues 71–82 are Cytoplasmic-facing; the sequence is TMKFKKLRHPLN. The helical transmembrane segment at 83 to 108 threads the bilayer; sequence WILVNLAIADLAETVIASTISVVNQV. Over 109 to 122 the chain is Extracellular; the sequence is HGYFVLGHPMCVLE. Cys119 and Cys196 are joined by a disulfide. A helical membrane pass occupies residues 123-142; it reads GYTVSLCGITGLWSLAIISW. Topologically, residues 143–161 are cytoplasmic; that stretch reads ERWLVVCKPFGNVRFDAKL. The chain crosses the membrane as a helical span at residues 162–185; that stretch reads AIVGVAFSWIWSAVWTAPPIFGWS. The Extracellular portion of the chain corresponds to 186-211; the sequence is RYWPHGLKTSCGPDVFSGSSYPGVQS. The helical transmembrane segment at 212 to 239 threads the bilayer; that stretch reads YMIVLMITCCFLPLGIIVLCYLQVWLAI. The Cytoplasmic portion of the chain corresponds to 240–261; sequence RAVAKQQKESESTQKAEKEVTR. Residues 262–285 traverse the membrane as a helical segment; that stretch reads MVVVMIVAYCVCWGPYTFFACFAA. The Extracellular portion of the chain corresponds to 286-293; that stretch reads ANPGYAFH. The chain crosses the membrane as a helical span at residues 294-318; it reads PLMAALPAYFAKSATIYNPIIYVFM. Lys305 carries the post-translational modification N6-(retinylidene)lysine. Over 319–350 the chain is Cytoplasmic; the sequence is NRQFRNCILQLFGKKVDDGSELSSASKTEVSS.

The protein belongs to the G-protein coupled receptor 1 family. Opsin subfamily. In terms of processing, phosphorylated on some or all of the serine and threonine residues present in the C-terminal region. The color pigments are found in the cone photoreceptor cells.

The protein resides in the membrane. In terms of biological role, visual pigments are the light-absorbing molecules that mediate vision. They consist of an apoprotein, opsin, covalently linked to cis-retinal. This is Opsin, longwave 563 nm from Callithrix jacchus (White-tufted-ear marmoset).